The primary structure comprises 832 residues: Tuftelin-interacting protein 11 (832 aa).

Disordered regions lie at residues 1–21 (MSMS…GVEI) and 33–145 (NEFN…GNWE). 2 stretches are compositionally biased toward basic and acidic residues: residues 36 to 49 (NPDR…KEEA) and 88 to 99 (TAAEEKAEREGS). Residues 121–130 (TGGSFKTSQR) are compositionally biased toward polar residues. A G-patch domain is found at 148-194 (TRGIGQKLLQKMGYVPGKGLGKNAQGIVNPIEAKLRKGKGAVGAYGS). Ser209 carries the post-translational modification Phosphoserine.

The protein belongs to the TFP11/STIP family. As to quaternary structure, identified in the spliceosome C complex.

The protein localises to the nucleus. Its function is as follows. Involved in pre-mRNA splicing, specifically in spliceosome disassembly during late-stage splicing events. The protein is Tuftelin-interacting protein 11 (tfip11) of Danio rerio (Zebrafish).